The sequence spans 456 residues: 5-hydroxytryptamine receptor 3E (456 aa).

Residues 1 to 25 (MEGSWFHRKRFSFYLLLGFLLQGRG) form the signal peptide. The Extracellular portion of the chain corresponds to 26–248 (VTFTINCSGF…FYVAIRRRPS (223 aa)). A disulfide bridge connects residues cysteine 162 and cysteine 176. Asparagine 175 carries N-linked (GlcNAc...) asparagine glycosylation. Residues 249–269 (LYVINLLVPSGFLVAIDALSF) form a helical membrane-spanning segment. Residues 270–282 (YLPVKSGNRVPFK) are Cytoplasmic-facing. Residues 283–303 (ITLLLGYNVFLLMMSDLLPTS) form a helical membrane-spanning segment. Residues 304–307 (GTPL) lie on the Extracellular side of the membrane. A helical transmembrane segment spans residues 308–328 (IGVYFALCLSLMVGSLLETIF). The Cytoplasmic segment spans residues 329–433 (ITHLLHVATT…WLQFSHAMDA (105 aa)). The segment at 401-432 (TGGSEWTRAQREHEAQKQHSVELWLQFSHAMD) is HA-stretch; determines single-channel conductance in 5-HT3 receptors. The helical transmembrane segment at 434–454 (MLFRLYLLFMASSIITVICLW) threads the bilayer. Topologically, residues 455 to 456 (NT) are extracellular.

This sequence belongs to the ligand-gated ion channel (TC 1.A.9) family. 5-hydroxytryptamine receptor (TC 1.A.9.2) subfamily. HTR3E sub-subfamily. In terms of assembly, forms homopentameric as well as heteropentameric serotonin-activated cation-selective channel complexes with HTR3A. The homomeric complex is not functional. Heteropentameric complexes display properties which resemble that of neuronal serotonin-activated channels in vivo. In terms of tissue distribution, expressed in adult colon and intestine.

It localises to the postsynaptic cell membrane. It is found in the cell membrane. The enzyme catalyses Na(+)(in) = Na(+)(out). The catalysed reaction is K(+)(in) = K(+)(out). It carries out the reaction Ca(2+)(in) = Ca(2+)(out). Functionally, forms serotonin (5-hydroxytryptamine/5-HT3)-activated cation-selective channel complexes, which when activated cause fast, depolarizing responses in neurons. In Homo sapiens (Human), this protein is 5-hydroxytryptamine receptor 3E.